We begin with the raw amino-acid sequence, 409 residues long: uncharacterized protein (409 aa).

The N-acetyltransferase domain occupies 3-162 (TDVRVLRQDD…DDVRLRYAVP (160 aa)). Acetyl-CoA contacts are provided by residues 82–84 (VSV), 90–95 (RRGVLT), and 118–119 (SE). Tyr-123 acts as the Proton donor in catalysis. Phe-409 functions as the Proton acceptor; via carboxylate in the catalytic mechanism.

It belongs to the acetyltransferase Eis family. As to quaternary structure, homohexamer; trimer of dimers.

This is an uncharacterized protein from Streptomyces avermitilis (strain ATCC 31267 / DSM 46492 / JCM 5070 / NBRC 14893 / NCIMB 12804 / NRRL 8165 / MA-4680).